We begin with the raw amino-acid sequence, 158 residues long: MQRYPMTPQGHAALEAELKQLKSIDRPRITASIAEAREHGDLKENAEYHAAREQQGFCEARIRDIEAKLGGAQVIDPTTLPKDGRVIFGVSVVIENMDTEEEKQYKIVGDDEADFKAGKISVNSPIARGLIGKSEGDEARIETPKGVVEYEIMKVIYD.

This sequence belongs to the GreA/GreB family.

Necessary for efficient RNA polymerase transcription elongation past template-encoded arresting sites. The arresting sites in DNA have the property of trapping a certain fraction of elongating RNA polymerases that pass through, resulting in locked ternary complexes. Cleavage of the nascent transcript by cleavage factors such as GreA or GreB allows the resumption of elongation from the new 3'terminus. GreA releases sequences of 2 to 3 nucleotides. This Psychrobacter cryohalolentis (strain ATCC BAA-1226 / DSM 17306 / VKM B-2378 / K5) protein is Transcription elongation factor GreA.